The sequence spans 159 residues: Transcription elongation factor GreA (159 aa).

A coiled-coil region spans residues 14 to 76 (VKKLEEELEY…QLENMLRNAN (63 aa)).

This sequence belongs to the GreA/GreB family.

Functionally, necessary for efficient RNA polymerase transcription elongation past template-encoded arresting sites. The arresting sites in DNA have the property of trapping a certain fraction of elongating RNA polymerases that pass through, resulting in locked ternary complexes. Cleavage of the nascent transcript by cleavage factors such as GreA or GreB allows the resumption of elongation from the new 3'terminus. GreA releases sequences of 2 to 3 nucleotides. This is Transcription elongation factor GreA from Clostridium novyi (strain NT).